A 477-amino-acid polypeptide reads, in one-letter code: RNA pseudouridine synthase 6, chloroplastic (477 aa).

Residues 1 to 52 (MPKAAASLASLLPQLWHRPVQPPPFLHRALSSSSPLLRRHRAALHSPAAPLS) constitute a chloroplast transit peptide. An S4 RNA-binding domain is found at 98 to 205 (EVAVDFISRS…FPRCYEIDWK (108 aa)). D258 is a catalytic residue.

Belongs to the pseudouridine synthase RluA family.

It is found in the plastid. Its subcellular location is the chloroplast. It catalyses the reaction a uridine in RNA = a pseudouridine in RNA. This chain is RNA pseudouridine synthase 6, chloroplastic, found in Oryza sativa subsp. japonica (Rice).